Here is a 139-residue protein sequence, read N- to C-terminus: MIWKKKYTLEQMNLLSQNTAISHLAIQFSAQGENWLEATMPVDQRTIQPMGFLHGGLSVALAETIGSMAGFCCITENQFVLGLEINANHLRPVKQGIVTARATPIHLGTRTQVWQIEIKDQQDQLCCLSRLTLSVGNHE.

The protein belongs to the thioesterase PaaI family.

This chain is Putative esterase PM0788, found in Pasteurella multocida (strain Pm70).